Here is a 166-residue protein sequence, read N- to C-terminus: uncharacterized protein (166 aa).

The 81-residue stretch at 2–82 (DNWVCYLIMS…KRLSKKRNIQ (81 aa)) folds into the GIY-YIG domain. Residues 23 to 43 (NNRQRRLNDHNNLNPSRKGAK) are disordered.

This is an uncharacterized protein from Acanthamoeba polyphaga mimivirus (APMV).